Consider the following 232-residue polypeptide: Glutathione S-transferase E14 (232 aa).

Residues 4–85 enclose the GST N-terminal domain; that stretch reads PKPILYYDER…HLAEKFDEGG (82 aa). The GST C-terminal domain occupies 91–218; sequence EHAERMKVLN…RQTMESVGSF (128 aa).

It belongs to the GST superfamily. Epsilon family. As to expression, expressed in the adult ovary (at protein level).

It catalyses the reaction RX + glutathione = an S-substituted glutathione + a halide anion + H(+). Its function is as follows. Conjugation of reduced glutathione to a wide number of exogenous and endogenous hydrophobic electrophiles. Essential for ecdysteroid biosynthesis. May be involved in detoxification. This Drosophila melanogaster (Fruit fly) protein is Glutathione S-transferase E14.